Consider the following 59-residue polypeptide: Preprotein translocase subunit SecG (59 aa).

Residues 1–35 lie on the Cytoplasmic side of the membrane; sequence MPSSKKKKEDVPIASMAGLVRYYESEKEKVKISPK. Residues 36–56 form a helical membrane-spanning segment; that stretch reads VVVVASIVLIAGVIIASFIIP. The Extracellular segment spans residues 57 to 59; sequence PPL.

Belongs to the SEC61-beta family. Component of the protein translocase complex. Heterotrimer consisting of alpha (SecY), beta (SecG) and gamma (SecE) subunits. Can form oligomers of the heterotrimer.

The protein resides in the cell membrane. Involved in protein export. The function of the beta subunit is unknown, but it may be involved in stabilization of the trimeric complex. This is Preprotein translocase subunit SecG from Sulfolobus acidocaldarius (strain ATCC 33909 / DSM 639 / JCM 8929 / NBRC 15157 / NCIMB 11770).